Here is a 330-residue protein sequence, read N- to C-terminus: uncharacterized protein (330 aa).

2 disordered regions span residues 136-160 (VPPSVNEPKPKTSQTTKPPSNDESS) and 172-314 (DNEK…SQFN). The span at 223-235 (PKPPAPPPPPPVP) shows a compositional bias: pro residues. Low complexity predominate over residues 236 to 246 (ISMTPAAISVT). Polar residues-rich tracts occupy residues 263 to 276 (AQSTLPSVSSTTDE), 284 to 294 (TRSSSQSNSTV), and 304 to 314 (PASSPTFSQFN).

This is an uncharacterized protein from Danio rerio (Zebrafish).